The sequence spans 66 residues: MPKQKTHRASAKRFKRTGSGGLKRFRAFTSHRFHGKTKKQRRHLRKATMVSSGDFKRIKAMLTRLK.

The span at 1–16 (MPKQKTHRASAKRFKR) shows a compositional bias: basic residues. The interval 1-21 (MPKQKTHRASAKRFKRTGSGG) is disordered.

The protein belongs to the bacterial ribosomal protein bL35 family.

In Streptococcus agalactiae serotype Ia (strain ATCC 27591 / A909 / CDC SS700), this protein is Large ribosomal subunit protein bL35.